The following is a 196-amino-acid chain: Recombination protein RecR (196 aa).

Residues 57-72 form a C4-type zinc finger; that stretch reads CERCNTFTEAPVCSTC. The Toprim domain maps to 80-175; it reads RQLCVVETPA…SVTRLARGVP (96 aa).

Belongs to the RecR family.

In terms of biological role, may play a role in DNA repair. It seems to be involved in an RecBC-independent recombinational process of DNA repair. It may act with RecF and RecO. This chain is Recombination protein RecR, found in Methylibium petroleiphilum (strain ATCC BAA-1232 / LMG 22953 / PM1).